A 162-amino-acid polypeptide reads, in one-letter code: Phosphopantetheine adenylyltransferase (162 aa).

A substrate-binding site is contributed by serine 11. Residues 11–12 (SF) and histidine 19 each bind ATP. Lysine 43, threonine 75, and arginine 89 together coordinate substrate. Residues 90 to 92 (GLR), glutamate 100, and 125 to 131 (YAFLSSS) contribute to the ATP site.

It belongs to the bacterial CoaD family. Homohexamer. It depends on Mg(2+) as a cofactor.

It localises to the cytoplasm. It catalyses the reaction (R)-4'-phosphopantetheine + ATP + H(+) = 3'-dephospho-CoA + diphosphate. The protein operates within cofactor biosynthesis; coenzyme A biosynthesis; CoA from (R)-pantothenate: step 4/5. Functionally, reversibly transfers an adenylyl group from ATP to 4'-phosphopantetheine, yielding dephospho-CoA (dPCoA) and pyrophosphate. The chain is Phosphopantetheine adenylyltransferase from Finegoldia magna (strain ATCC 29328 / DSM 20472 / WAL 2508) (Peptostreptococcus magnus).